The sequence spans 482 residues: UDP-N-acetylmuramoyl-L-alanyl-D-glutamate--2,6-diaminopimelate ligase (482 aa).

UDP-N-acetyl-alpha-D-muramoyl-L-alanyl-D-glutamate-binding residues include Leu28 and Ser30. An ATP-binding site is contributed by 108-114; sequence GTNGKTT. UDP-N-acetyl-alpha-D-muramoyl-L-alanyl-D-glutamate contacts are provided by residues 150–151, Ser177, Gln183, and Arg185; that span reads TT. Position 217 is an N6-carboxylysine (Lys217). Meso-2,6-diaminopimelate is bound by residues Arg372, 396–399, Gly447, and Glu451; that span reads DNPR. A Meso-diaminopimelate recognition motif motif is present at residues 396–399; that stretch reads DNPR.

The protein belongs to the MurCDEF family. MurE subfamily. Mg(2+) serves as cofactor. In terms of processing, carboxylation is probably crucial for Mg(2+) binding and, consequently, for the gamma-phosphate positioning of ATP.

It is found in the cytoplasm. The catalysed reaction is UDP-N-acetyl-alpha-D-muramoyl-L-alanyl-D-glutamate + meso-2,6-diaminopimelate + ATP = UDP-N-acetyl-alpha-D-muramoyl-L-alanyl-gamma-D-glutamyl-meso-2,6-diaminopimelate + ADP + phosphate + H(+). It participates in cell wall biogenesis; peptidoglycan biosynthesis. Its function is as follows. Catalyzes the addition of meso-diaminopimelic acid to the nucleotide precursor UDP-N-acetylmuramoyl-L-alanyl-D-glutamate (UMAG) in the biosynthesis of bacterial cell-wall peptidoglycan. This chain is UDP-N-acetylmuramoyl-L-alanyl-D-glutamate--2,6-diaminopimelate ligase, found in Aquifex aeolicus (strain VF5).